Consider the following 168-residue polypeptide: Cytochrome c-type biogenesis protein CcmE (168 aa).

Topologically, residues 1-7 (MTRKQRR) are cytoplasmic. Residues 8–28 (LMLIGVCGAVLAVALGLVLWA) traverse the membrane as a helical; Signal-anchor for type II membrane protein segment. The Periplasmic segment spans residues 29–168 (MRGTIVFFRS…SGEKPALRQQ (140 aa)). Heme contacts are provided by H122 and Y126. A disordered region spans residues 134 to 168 (ALKKQGHWQGEAKHPGGTAPAPQTASGEKPALRQQ).

Belongs to the CcmE/CycJ family.

The protein resides in the cell inner membrane. Functionally, heme chaperone required for the biogenesis of c-type cytochromes. Transiently binds heme delivered by CcmC and transfers the heme to apo-cytochromes in a process facilitated by CcmF and CcmH. The protein is Cytochrome c-type biogenesis protein CcmE of Methylobacterium nodulans (strain LMG 21967 / CNCM I-2342 / ORS 2060).